Reading from the N-terminus, the 407-residue chain is Frizzled/smoothened-like sans CRD protein J (407 aa).

Positions 1-23 (MKFLFSVILVIISFLGISKIVNG) are cleaved as a signal peptide. Topologically, residues 24-89 (QIACPSPFLY…WNSFNKLVKQ (66 aa)) are extracellular. Asn-37 carries N-linked (GlcNAc...) asparagine glycosylation. The chain crosses the membrane as a helical span at residues 90 to 110 (MGAVAFTCSAIIMIIYGPLMN). At 111–120 (RSFFKFDRHT) the chain is on the cytoplasmic side. Residues 121 to 141 (ITVFCFALSTFFIGVSDLMFA) form a helical membrane-spanning segment. Residues 142-169 (TNDVDMVCPESHRYARQTDKTCATNGVL) are Extracellular-facing. Residues 170–190 (FQFGWLGSVMWFAFLSIDGFF) form a helical membrane-spanning segment. The Cytoplasmic segment spans residues 191–199 (RASGKKMNK). Residues 200–220 (IAFAIVLASIWILNIVLSFAP) traverse the membrane as a helical segment. Residues 221–246 (MGGDQYGAYFVGQVNCWILVKNWQYA) lie on the Extracellular side of the membrane. Residues 247–267 (FFWAELIVSLAIGFVGICLTI) traverse the membrane as a helical segment. At 268-285 (YSLIRKTSDGNTLKHVTP) the chain is on the cytoplasmic side. The chain crosses the membrane as a helical span at residues 286–306 (LILVFLLFCQYLYMIIFYGII). The Extracellular segment spans residues 307-354 (NEKKDHYQNILAEQVGCIFNNALAKMKVPGIVYAGECTFNETITFSSQ). Asn-346 carries N-linked (GlcNAc...) asparagine glycosylation. A helical membrane pass occupies residues 355 to 375 (YAFLFFVRLLGIEIFAFYLFS). At 376-407 (KETLLLIKSSYIATMFGLGDKDAYDVELEETD) the chain is on the cytoplasmic side.

It belongs to the G-protein coupled receptor Fz/Smo family.

Its subcellular location is the membrane. This is Frizzled/smoothened-like sans CRD protein J (fscJ) from Dictyostelium discoideum (Social amoeba).